The primary structure comprises 585 residues: Urease subunit alpha (585 aa).

Positions 132-585 constitute a Urease domain; that stretch reads GGIDTHIHFI…LPMAQRYFLF (454 aa). His-137, His-139, and Lys-220 together coordinate Ni(2+). Lys-220 is subject to N6-carboxylysine. His-222 is a binding site for substrate. Ni(2+) is bound by residues His-249 and His-275. The active-site Proton donor is His-323. Asp-363 serves as a coordination point for Ni(2+).

The protein belongs to the metallo-dependent hydrolases superfamily. Urease alpha subunit family. In terms of assembly, heterotrimer of UreA (gamma), UreB (beta) and UreC (alpha) subunits. Three heterotrimers associate to form the active enzyme. Ni cation is required as a cofactor. Post-translationally, carboxylation allows a single lysine to coordinate two nickel ions.

The protein resides in the cytoplasm. It carries out the reaction urea + 2 H2O + H(+) = hydrogencarbonate + 2 NH4(+). Its pathway is nitrogen metabolism; urea degradation; CO(2) and NH(3) from urea (urease route): step 1/1. The protein is Urease subunit alpha of Pseudarthrobacter chlorophenolicus (strain ATCC 700700 / DSM 12829 / CIP 107037 / JCM 12360 / KCTC 9906 / NCIMB 13794 / A6) (Arthrobacter chlorophenolicus).